The following is a 284-amino-acid chain: Proteasome subunit pbs-5 (284 aa).

The propeptide at 1–64 (MWGETFDDFE…AGKSMQFRKG (64 aa)) is removed in mature form. Residue T65 is the Nucleophile of the active site.

It belongs to the peptidase T1B family. The 26S proteasome consists of a 20S proteasome core and two 19S regulatory subunits. The 20S proteasome core is composed of 28 subunits that are arranged in four stacked rings, resulting in a barrel-shaped structure. The two end rings are each formed by seven alpha subunits, and the two central rings are each formed by seven beta subunits. The catalytic chamber with the active sites is on the inside of the barrel.

It is found in the cytoplasm. The protein localises to the nucleus. The enzyme catalyses Cleavage of peptide bonds with very broad specificity.. Component of the 20S core proteasome complex involved in the proteolytic degradation of most intracellular proteins. This complex plays numerous essential roles within the cell by associating with different regulatory particles. Associated with two 19S regulatory particles, forms the 26S proteasome and thus participates in the ATP-dependent degradation of ubiquitinated proteins. The 26S proteasome plays a key role in the maintenance of protein homeostasis by removing misfolded or damaged proteins that could impair cellular functions, and by removing proteins whose functions are no longer required. This Caenorhabditis elegans protein is Proteasome subunit pbs-5.